Reading from the N-terminus, the 421-residue chain is CaM kinase-like vesicle-associated protein (421 aa).

Residues 24–284 (YDLGQVVKSE…AQEAIAHEWI (261 aa)) enclose the Protein kinase domain. The disordered stretch occupies residues 326–421 (ASEQGDTGAS…PQMLPQRKGY (96 aa)). Low complexity-rich tracts occupy residues 330-340 (GDTGASGLAAG) and 390-406 (QQQAQQQQQAQQQQQAR).

It belongs to the protein kinase superfamily. CAMK Ser/Thr protein kinase family. Interacts with calmodulin, in the presence of calcium. Ca(2+) is required as a cofactor. As to expression, ubiquitously expressed.

The protein localises to the cytoplasmic vesicle membrane. Does not appear to have detectable kinase activity. This chain is CaM kinase-like vesicle-associated protein (camkv), found in Takifugu rubripes (Japanese pufferfish).